Reading from the N-terminus, the 977-residue chain is uncharacterized protein (977 aa).

Residues 1–24 (MMQQRSGSLSLLSNAVQAGQSSDP) are compositionally biased toward polar residues. The interval 1–65 (MMQQRSGSLS…HEKTKAGKDR (65 aa)) is disordered. Residues 72–99 (CQSCRKKKVKCSGERPSCDQCLKHNIPC) constitute a DNA-binding region (zn(2)-C6 fungal-type). A disordered region spans residues 176-195 (LSHPTIVPSSNSSSLLNSTN). Over residues 177 to 195 (SHPTIVPSSNSSSLLNSTN) the composition is skewed to low complexity. Position 220 is a phosphoserine (S220). 3 disordered regions span residues 287-307 (TDSL…DSNR), 357-380 (NSAS…NNSL), and 751-774 (HTPI…ANGA). The span at 364–379 (STSYTNNNDTTSDNNS) shows a compositional bias: low complexity. The segment covering 751–770 (HTPINVTNGESQNNSNNDPS) has biased composition (polar residues).

The protein localises to the cytoplasm. The protein resides in the nucleus. This is an uncharacterized protein from Schizosaccharomyces pombe (strain 972 / ATCC 24843) (Fission yeast).